The sequence spans 264 residues: Thymidylate synthase (264 aa).

Residue R21 coordinates dUMP. (6R)-5,10-methylene-5,6,7,8-tetrahydrofolate is bound at residue H51. DUMP is bound at residue 126 to 127 (RR). C146 serves as the catalytic Nucleophile. Residues 166–169 (RSAD), N177, and 207–209 (HLY) each bind dUMP. D169 serves as a coordination point for (6R)-5,10-methylene-5,6,7,8-tetrahydrofolate. Position 263 (A263) interacts with (6R)-5,10-methylene-5,6,7,8-tetrahydrofolate.

It belongs to the thymidylate synthase family. Bacterial-type ThyA subfamily. As to quaternary structure, homodimer.

Its subcellular location is the cytoplasm. The enzyme catalyses dUMP + (6R)-5,10-methylene-5,6,7,8-tetrahydrofolate = 7,8-dihydrofolate + dTMP. Its pathway is pyrimidine metabolism; dTTP biosynthesis. Catalyzes the reductive methylation of 2'-deoxyuridine-5'-monophosphate (dUMP) to 2'-deoxythymidine-5'-monophosphate (dTMP) while utilizing 5,10-methylenetetrahydrofolate (mTHF) as the methyl donor and reductant in the reaction, yielding dihydrofolate (DHF) as a by-product. This enzymatic reaction provides an intracellular de novo source of dTMP, an essential precursor for DNA biosynthesis. This Hyphomonas neptunium (strain ATCC 15444) protein is Thymidylate synthase.